Reading from the N-terminus, the 419-residue chain is UDP-N-acetylglucosamine 1-carboxyvinyltransferase (419 aa).

22 to 23 lines the phosphoenolpyruvate pocket; that stretch reads KN. A UDP-N-acetyl-alpha-D-glucosamine-binding site is contributed by Arg91. The active-site Proton donor is the Cys115. At Cys115 the chain carries 2-(S-cysteinyl)pyruvic acid O-phosphothioketal. Residues 120–124, 160–163, Asp305, and Ile327 contribute to the UDP-N-acetyl-alpha-D-glucosamine site; these read RPVDL and KVSV.

The protein belongs to the EPSP synthase family. MurA subfamily.

The protein resides in the cytoplasm. The enzyme catalyses phosphoenolpyruvate + UDP-N-acetyl-alpha-D-glucosamine = UDP-N-acetyl-3-O-(1-carboxyvinyl)-alpha-D-glucosamine + phosphate. It functions in the pathway cell wall biogenesis; peptidoglycan biosynthesis. Its function is as follows. Cell wall formation. Adds enolpyruvyl to UDP-N-acetylglucosamine. This Tolumonas auensis (strain DSM 9187 / NBRC 110442 / TA 4) protein is UDP-N-acetylglucosamine 1-carboxyvinyltransferase.